A 69-amino-acid chain; its full sequence is Beta-defensin 122 (69 aa).

An N-terminal signal peptide occupies residues 1–19 (MKPFLVTLAVLLLFFQVTA). Intrachain disulfides connect cysteine 26–cysteine 53, cysteine 33–cysteine 47, and cysteine 37–cysteine 54.

The protein belongs to the beta-defensin family.

It is found in the secreted. In terms of biological role, has antibacterial activity. The protein is Beta-defensin 122 (DEFB122) of Macaca mulatta (Rhesus macaque).